An 858-amino-acid chain; its full sequence is DNA mismatch repair protein MutS (858 aa).

603-610 contacts ATP; the sequence is GPNMSGKS.

Belongs to the DNA mismatch repair MutS family.

Its function is as follows. This protein is involved in the repair of mismatches in DNA. It is possible that it carries out the mismatch recognition step. This protein has a weak ATPase activity. The sequence is that of DNA mismatch repair protein MutS from Streptococcus agalactiae serotype Ia (strain ATCC 27591 / A909 / CDC SS700).